The following is a 147-amino-acid chain: Cyanate hydratase (147 aa).

Catalysis depends on residues Arg88, Glu91, and Ser114.

The protein belongs to the cyanase family.

It catalyses the reaction cyanate + hydrogencarbonate + 3 H(+) = NH4(+) + 2 CO2. Catalyzes the reaction of cyanate with bicarbonate to produce ammonia and carbon dioxide. This Cupriavidus necator (strain ATCC 17699 / DSM 428 / KCTC 22496 / NCIMB 10442 / H16 / Stanier 337) (Ralstonia eutropha) protein is Cyanate hydratase.